The sequence spans 287 residues: Beta-lactamase GES-1 (287 aa).

Positions 1-18 are cleaved as a signal peptide; sequence MRFIHALLLAGIAHSAYA. The cysteines at positions 63 and 233 are disulfide-linked. Ser64 (nucleophile; acyl-ester intermediate) is an active-site residue. Residues Lys67, Ser125, Glu161, and Thr232 each contribute to the a beta-lactam site.

It belongs to the class-A beta-lactamase family. Monomer. May form dimers.

It catalyses the reaction a beta-lactam + H2O = a substituted beta-amino acid. With respect to regulation, inhibited by the beta-lactamase-blocking agents clavulanic acid, tazobactam, sulbactam and tazobactam and the carbapenem, imipenem. Inhibition by imipenem may involve Gly-165. Functionally, extended-spectrum beta-lactamase (ESBL) which confers resistance to penicillins, as well as first, second, third and fourth-generation cephalosporins. Has ceftazidime-hydrolyzing activity. Inactive against the carbapenems, imipenem, meropenem, ertapenem and doripenem. However, weak hydrolytic activity with respect to imipenem has also been reported. In Klebsiella pneumoniae, this protein is Beta-lactamase GES-1.